The chain runs to 191 residues: Flavin reductase (NADH) (191 aa).

46–52 (YGLTCSA) is a binding site for FAD. Serine 55 provides a ligand contact to NAD(+). 72 to 73 (RV) contributes to the FAD binding site. NAD(+) is bound by residues histidine 144 and 166–169 (YWRR).

The protein belongs to the non-flavoprotein flavin reductase family.

It carries out the reaction a reduced flavin + NAD(+) = an oxidized flavin + NADH + 2 H(+). In terms of biological role, catalyzes the reduction of flavin by NADH. Subsequently, the reduced flavins is transferred to the tetracycline 7-halogenase CtcP. The chain is Flavin reductase (NADH) from Kitasatospora aureofaciens (Streptomyces aureofaciens).